A 636-amino-acid polypeptide reads, in one-letter code: Probable potassium transport system protein Kup (636 aa).

Helical transmembrane passes span 22–42 (LGLL…SPLY), 64–84 (ILSL…VMFI), 115–135 (LMVI…MITP), 150–170 (FDGI…ALFL), 182–202 (LFGP…VHGI), 220–240 (FFVV…LALT), 261–281 (WFIL…ALLL), 293–313 (LLAP…ATVI), 351–371 (IYIG…VIGF), 383–403 (VAVT…MLLL), 408–428 (PVLA…FFAA), and 433–453 (IVQG…LMST).

The protein belongs to the HAK/KUP transporter (TC 2.A.72) family.

The protein localises to the cell inner membrane. It carries out the reaction K(+)(in) + H(+)(in) = K(+)(out) + H(+)(out). In terms of biological role, transport of potassium into the cell. Likely operates as a K(+):H(+) symporter. The chain is Probable potassium transport system protein Kup from Pseudomonas putida (strain GB-1).